Here is a 237-residue protein sequence, read N- to C-terminus: Pyridoxine 5'-phosphate synthase (237 aa).

Positions 7 and 18 each coordinate 3-amino-2-oxopropyl phosphate. Histidine 43 serves as the catalytic Proton acceptor. 1-deoxy-D-xylulose 5-phosphate contacts are provided by arginine 45 and histidine 50. Glutamate 70 functions as the Proton acceptor in the catalytic mechanism. Threonine 100 contributes to the 1-deoxy-D-xylulose 5-phosphate binding site. The active-site Proton donor is histidine 190. 3-amino-2-oxopropyl phosphate is bound by residues aspartate 191 and 213-214 (GH).

It belongs to the PNP synthase family. In terms of assembly, homooctamer; tetramer of dimers.

The protein resides in the cytoplasm. The catalysed reaction is 3-amino-2-oxopropyl phosphate + 1-deoxy-D-xylulose 5-phosphate = pyridoxine 5'-phosphate + phosphate + 2 H2O + H(+). It functions in the pathway cofactor biosynthesis; pyridoxine 5'-phosphate biosynthesis; pyridoxine 5'-phosphate from D-erythrose 4-phosphate: step 5/5. Functionally, catalyzes the complicated ring closure reaction between the two acyclic compounds 1-deoxy-D-xylulose-5-phosphate (DXP) and 3-amino-2-oxopropyl phosphate (1-amino-acetone-3-phosphate or AAP) to form pyridoxine 5'-phosphate (PNP) and inorganic phosphate. The protein is Pyridoxine 5'-phosphate synthase of Christiangramia forsetii (strain DSM 17595 / CGMCC 1.15422 / KT0803) (Gramella forsetii).